Consider the following 122-residue polypeptide: uncharacterized protein (122 aa).

Residues 79 to 114 adopt a coiled-coil conformation; sequence VIEDVASAIKEMMESAAKDLDKIEEVIKESLEKYLR.

This is an uncharacterized protein from Archaeoglobus fulgidus (strain ATCC 49558 / DSM 4304 / JCM 9628 / NBRC 100126 / VC-16).